We begin with the raw amino-acid sequence, 148 residues long: Lysozyme C (148 aa).

The first 18 residues, 1-18, serve as a signal peptide directing secretion; it reads MKALIVLGLVLLSVTVQG. The C-type lysozyme domain occupies 19–148; that stretch reads KVFERCELAR…VRQYVQGCGV (130 aa). 4 disulfides stabilise this stretch: Cys-24-Cys-146, Cys-48-Cys-134, Cys-83-Cys-99, and Cys-95-Cys-113. Active-site residues include Glu-53 and Asp-71.

It belongs to the glycosyl hydrolase 22 family. Monomer.

The protein localises to the secreted. It carries out the reaction Hydrolysis of (1-&gt;4)-beta-linkages between N-acetylmuramic acid and N-acetyl-D-glucosamine residues in a peptidoglycan and between N-acetyl-D-glucosamine residues in chitodextrins.. Lysozymes have primarily a bacteriolytic function; those in tissues and body fluids are associated with the monocyte-macrophage system and enhance the activity of immunoagents. The polypeptide is Lysozyme C (LYZ) (Homo sapiens (Human)).